Reading from the N-terminus, the 608-residue chain is Probable adenylate kinase 5, chloroplastic (608 aa).

The span at 1–20 shows a compositional bias: low complexity; sequence MAASSSSSSPAAASAPFAAP. The tract at residues 1–44 is disordered; the sequence is MAASSSSSSPAAASAPFAAPGPHRRPGLALRPSPPTPPSSSLSC. The N-terminal 75 residues, 1–75, are a transit peptide targeting the chloroplast; sequence MAASSSSSSP…GPRGMGLRCR (75 aa). Residue 99–104 coordinates ATP; the sequence is ASGKGT. Positions 119-148 are NMP; sequence STGDLLRAEVSSGTEIGKKAKEYMDNGMLV. Residues Thr-120, Arg-125, 146–148, 175–178, and Gln-182 each bind AMP; these read MLV and GYPR. Residues Arg-209, Arg-213, and 222-223 contribute to the ATP site; that span reads IY. Residues 212–245 form an LID region; that stretch reads GRRLDPETGKIYHIKNFPPENDEVSARLVTRSDD. Residues Arg-242 and Arg-253 each contribute to the AMP site.

It belongs to the adenylate kinase family.

Its subcellular location is the plastid. It is found in the chloroplast. The catalysed reaction is AMP + ATP = 2 ADP. In terms of biological role, catalyzes the reversible transfer of the terminal phosphate group between ATP and AMP. Plays an important role in cellular energy homeostasis and in adenine nucleotide metabolism. The protein is Probable adenylate kinase 5, chloroplastic of Oryza sativa subsp. japonica (Rice).